The sequence spans 125 residues: Photoactive yellow protein (125 aa).

Residues 23–86 (LDGLAFGAIQ…GKFKEGVASG (64 aa)) form the PAS domain. Residue C69 is modified to S-(4-hydroxycinnamyl)cysteine.

The protein belongs to the photoactive yellow protein family. In terms of assembly, monomer. Post-translationally, the 4-hydroxycinnamic acid (p-coumaric acid) chromophore is covalently bound via a thioester linkage.

In terms of biological role, photoactive blue light protein. Probably functions as a photoreceptor for a negative phototaxis response. This Halorhodospira halophila (Ectothiorhodospira halophila) protein is Photoactive yellow protein (pyp).